The following is a 490-amino-acid chain: 5'-3' exonuclease PLD3 (490 aa).

The Cytoplasmic segment spans residues 1–38 (MKPKLMYQELKVPAEEPANELPMNEIEAWKAAEKKARW). The helical; Signal-anchor for type II membrane protein transmembrane segment at 39-59 (VLLVLILAVVGFGALMTQLFL) threads the bilayer. Topologically, residues 60–490 (WEYGDLHLFG…DSVGNACRLL (431 aa)) are lumenal. 2 cysteine pairs are disulfide-bonded: C77-C239 and C81-C237. N-linked (GlcNAc...) asparagine glycans are attached at residues N97 and N132. In terms of domain architecture, PLD phosphodiesterase 1 spans 196–223 (THGVLHTKFWVVDQTHFYLGSANMDWRS). Catalysis depends on residues H201, K203, and D208. The Proton donor role is filled by H201. H201 and K203 together coordinate phosphate. N218 serves as a coordination point for phosphate. N-linked (GlcNAc...) asparagine glycosylation is found at N236, N284, and N387. A disulfide bond links C366 and C487. Residues 411–437 (YARVNHNKYMVTERATYIGTSNWSGNY) enclose the PLD phosphodiesterase 2 domain. H416 is a phosphate binding site. The active-site Nucleophile is the H416. A Mg(2+)-binding site is contributed by F438.

The protein belongs to the phospholipase D family. In terms of assembly, homodimer. Interacts with APP. N-glycosylated. In terms of processing, proteolytically processed to a soluble form that is stable within endosomes and lysosomes. During transport through the secretory pathway becomes proteolysed by cysteine proteases, thereby releasing a stable soluble lysosomal lumenal polypeptide, whereas the transmembrane-bound fragment is rapidly degraded. Its transport route to lysosomes involves ubiquitination and the ESCRT complex. Post-translationally, ubiquitinated. Ubiquitination mediates sorting into lysosomes.

Its subcellular location is the endoplasmic reticulum membrane. The protein resides in the lysosome lumen. The protein localises to the early endosome membrane. It is found in the late endosome membrane. It localises to the golgi apparatus membrane. Its subcellular location is the endosome membrane. It catalyses the reaction Exonucleolytic cleavage in the 5'- to 3'-direction to yield nucleoside 3'-phosphates.. The catalysed reaction is a 5'-end 5'-dephospho-ribonucleotidyl-ribonucleotide-RNA + H2O = a ribonucleoside 3'-phosphate + a 5'-end dephospho-ribonucleoside-RNA + H(+). The enzyme catalyses a ribonucleoside 3'-phosphate-2'-3'-cyclophospho-GMP + H2O = a ribonucleoside 3'-phosphate + 2',3'-cyclophospho-GMP + H(+). It carries out the reaction a 5'-end 5'-dephospho-2'-deoxyribonucleotidyl-2'-deoxyribonucleotide in single-stranded DNA + H2O = a 5'-end dephospho-2'-deoxyribonucleoside in single-stranded DNA + a 2'-deoxyribonucleoside 3'-phosphate + H(+). It catalyses the reaction a 5'-end 5'-phospho-2'-deoxyribonucleotide in single-stranded DNA + H2O = a 5'-end 5'-dephospho-2'-deoxyribonucleotide in single-stranded DNA + phosphate. The catalysed reaction is a 3-lyso-sn-glycero-1-phospho-(3'-acyl-1'-sn-glycerol) + a 1-acyl-sn-glycerol = a 3-acyl-sn-glycero-1-phospho-(3'-acyl-1'-sn-glycerol) + glycerol. The enzyme catalyses 3-lyso-sn-glycero-1-phospho-(3'-(9Z-octadecenoyl)-1'-sn-glycerol) + 1-(9Z-octadecenoyl)-sn-glycerol = 3-(9Z-octadecenoyl)-sn-glycero-1-phospho-(3'-(9Z-octadecenoyl)-1'-sn-glycerol) + glycerol. Functionally, 5'-&gt;3' exonuclease that hydrolyzes the phosphodiester bond of single-stranded DNA (ssDNA) and RNA molecules to form nucleoside 3'-monophosphates and 5'-end 5'-hydroxy deoxyribonucleotide/ribonucleotide fragments. Partially redundant with PLD4, can cleave all four nucleotides displaying higher efficiency for ssDNA and RNA fragments initiated with uridine and guanosine residues and lower efficiency for cytidine-initiated substrates. As a result, it does not always degrade polynucleotides to the single nucleotide level, it can stall at specific sites sparing certain fragments from exonucleolytic degradation. Processes self and pathogenic ssDNA and RNA molecules that reach the endolysosomal compartment via phagocytosis or autophagy and may serve as 'danger' signals for recognition by innate immune receptors such as toll-like receptors (TLRs). Degrades mitochondrial CpG-rich ssDNA fragments to prevent TLR9 activation and autoinflammatory response, but it can cleave viral RNA to generate ligands for TLR7 activation and initiate antiviral immune responses. In plasmacytoid dendritic cells, it cooperates with endonuclease RNASET2 to release 2',3'-cyclic guanosine monophosphate (2',3'-cGMP), a potent stimulatory ligand for TLR7. Produces 2',3'-cGMPs and cytidine-rich RNA fragments that occupy TLR7 ligand-binding pockets and trigger a signaling-competent state. Can exert polynucleotide phosphatase activity toward 5'-phosphorylated ssDNA substrates although at a slow rate. Transphosphatidylase that catalyzes the exchange with R to S stereo-inversion of the glycerol moiety between (S,R)-lysophosphatidylglycerol (LPG) and monoacylglycerol (MAG) substrates to yield (S,S)-bis(monoacylglycero)phosphate (BMP). Can synthesize a variety of (S,S)-BMPs representing the main phospholipid constituent of lysosomal intralumenal vesicle (ILV) membranes that bind acid hydrolases for lipid degradation. Regulates the homeostasis and interorganellar communication of the endolysosomal system with an overall impact on cellular removal of dysfunctional organelles via autophagy as well as proper protein and lipid turnover. May play a role in myotube formation in response to ER stress. The sequence is that of 5'-3' exonuclease PLD3 (PLD3) from Macaca fascicularis (Crab-eating macaque).